The chain runs to 558 residues: Glucose-6-phosphate isomerase (558 aa).

Ala2 carries the post-translational modification N-acetylalanine. Residue Lys12 is modified to N6-acetyllysine. Residue Lys34 is modified to N6-(2-hydroxyisobutyryl)lysine. Ser107 carries the phosphoserine modification. Thr109 carries the phosphothreonine modification. The residue at position 142 (Lys142) is an N6-acetyllysine. 159 to 160 (GS) is a binding site for D-glucose 6-phosphate. Position 185 is a phosphoserine; by CK2 (Ser185). 210 to 215 (SKTFTT) lines the D-glucose 6-phosphate pocket. Thr250 carries the phosphothreonine modification. D-glucose 6-phosphate is bound by residues Gln354, Glu358, and His389. The Proton donor role is filled by Glu358. The active site involves His389. Lys454 carries the post-translational modification N6-acetyllysine; alternate. Position 454 is an N6-malonyllysine; alternate (Lys454). Lys454 carries the post-translational modification N6-succinyllysine; alternate. Ser455 bears the Phosphoserine mark. Lys519 is a binding site for D-glucose 6-phosphate. Residue Lys519 is part of the active site.

Belongs to the GPI family. As to quaternary structure, homodimer; in the catalytically active form. Monomer in the secreted form. In terms of processing, phosphorylation at Ser-185 by CK2 has been shown to decrease enzymatic activity and may contribute to secretion by a non-classical secretory pathway. Post-translationally, ISGylated.

Its subcellular location is the cytoplasm. It is found in the secreted. It catalyses the reaction alpha-D-glucose 6-phosphate = beta-D-fructose 6-phosphate. It participates in carbohydrate degradation; glycolysis; D-glyceraldehyde 3-phosphate and glycerone phosphate from D-glucose: step 2/4. Functionally, in the cytoplasm, catalyzes the conversion of glucose-6-phosphate to fructose-6-phosphate, the second step in glycolysis, and the reverse reaction during gluconeogenesis. Besides it's role as a glycolytic enzyme, also acts as a secreted cytokine: acts as an angiogenic factor (AMF) that stimulates endothelial cell motility. Acts as a neurotrophic factor, neuroleukin, for spinal and sensory neurons. It is secreted by lectin-stimulated T-cells and induces immunoglobulin secretion. This is Glucose-6-phosphate isomerase from Pongo abelii (Sumatran orangutan).